Reading from the N-terminus, the 997-residue chain is LPS-assembly protein LptD (997 aa).

The signal sequence occupies residues 1–27 (MLYSPLYQSIRLILFGALGLSSLTVSA).

Belongs to the LptD family. In terms of assembly, component of the lipopolysaccharide transport and assembly complex. Interacts with LptE and LptA.

The protein localises to the cell outer membrane. Its function is as follows. Together with LptE, is involved in the assembly of lipopolysaccharide (LPS) at the surface of the outer membrane. This is LPS-assembly protein LptD from Psychrobacter cryohalolentis (strain ATCC BAA-1226 / DSM 17306 / VKM B-2378 / K5).